The primary structure comprises 205 residues: Isochorismatase domain-containing protein 2 (205 aa).

The protein belongs to the isochorismatase family. As to quaternary structure, interacts with CDKN2A.

It localises to the cytoplasm. The protein localises to the nucleus. This chain is Isochorismatase domain-containing protein 2 (ISOC2), found in Macaca fascicularis (Crab-eating macaque).